Reading from the N-terminus, the 27-residue chain is Caerulein precursor fragment R1 (27 aa).

Expressed by the skin glands.

Its subcellular location is the secreted. Antimicrobial peptide. The sequence is that of Caerulein precursor fragment R1 from Xenopus ruwenzoriensis (Uganda clawed frog).